The sequence spans 427 residues: Hydroxylamine reductase (427 aa).

Cys3, Cys6, Cys15, and Cys21 together coordinate [4Fe-4S] cluster. 8 residues coordinate hybrid [4Fe-2O-2S] cluster: His129, Glu153, Cys197, Cys283, Cys311, Cys336, Glu370, and Lys372. Residue Cys283 is modified to Cysteine persulfide.

The protein belongs to the HCP family. [4Fe-4S] cluster serves as cofactor. It depends on hybrid [4Fe-2O-2S] cluster as a cofactor.

It localises to the cytoplasm. It carries out the reaction A + NH4(+) + H2O = hydroxylamine + AH2 + H(+). Its function is as follows. Catalyzes the reduction of hydroxylamine to form NH(3) and H(2)O. This Moorella thermoacetica (strain ATCC 39073 / JCM 9320) protein is Hydroxylamine reductase.